We begin with the raw amino-acid sequence, 434 residues long: MSILKVHAREIFDSRGNPTVEVDLFTSKGLFRAAVPSGASTGIYEALELRDNDKTRYMGKGVSKAVEHINKTIAPALVSKKLNVTEQEKIDKLMIEMDGTENKSKFGANAILGVSLAVCKAGAVEKGVPLYRHIADLAGNSEVILPVPAFNVINGGSHAGNKLAMQEFMILPVGAANFREAMRIGAEVYHNLKNVIKEKYGKDATNVGDEGGFAPNILENKEGLELLKTAIGKAGYTDKVVIGMDVAASEFFRSGKYDLDFKSPDDPSRYISPDQLADLYKSFIKDYPVVSIEDPFDQDDWGAWQKFTASAGIQVVGDDLTVANPKRIAKAVNEKSCNCLLLKVNQIGSVTESLQACKLAQANGWGVMVSHRSGETEDTFIADLVVGLCTGQIKTGAPCRSERLAKYNQLLRIEEELGSKAKFAGRNFRNPLAK.

S2 is modified (N-acetylserine). K5 is modified (N6-acetyllysine). S27 carries the post-translational modification Phosphoserine. Position 40 (S40) interacts with Mg(2+). At Y44 the chain carries Phosphotyrosine. K60 is modified (N6-acetyllysine; alternate). Position 60 is an N6-succinyllysine; alternate (K60). Residues K64 and K71 each carry the N6-acetyllysine modification. K89 carries the N6-acetyllysine; alternate modification. K89 carries the post-translational modification N6-succinyllysine; alternate. Residues K92 and K126 each carry the N6-acetyllysine modification. Substrate contacts are provided by H158 and E167. 2 positions are modified to N6-acetyllysine: K193 and K199. The residue at position 202 (K202) is an N6-acetyllysine; alternate. Residue K202 forms a Glycyl lysine isopeptide (Lys-Gly) (interchain with G-Cter in SUMO2); alternate linkage. The Proton donor role is filled by E210. N6-acetyllysine; alternate occurs at positions 228 and 233. K228 carries the post-translational modification N6-succinyllysine; alternate. Residue K228 is modified to N6-(2-hydroxyisobutyryl)lysine; alternate. K233 carries the N6-malonyllysine; alternate modification. D245 provides a ligand contact to Mg(2+). Position 254 is a phosphoserine (S254). At K256 the chain carries N6-acetyllysine. S263 and S272 each carry phosphoserine. K281 is modified (N6-acetyllysine; alternate). K281 carries the N6-(2-hydroxyisobutyryl)lysine; alternate modification. K285 bears the N6-acetyllysine mark. Y287 carries the phosphotyrosine modification. S291 carries the post-translational modification Phosphoserine. The Mg(2+) site is built by E293 and D318. Residues E293 and D318 each contribute to the substrate site. 2 positions are modified to N6-acetyllysine: K335 and K343. K343 acts as the Proton acceptor in catalysis. Residues 370 to 373 and K394 each bind substrate; that span reads SHRS. The tract at residues 405–434 is required for interaction with PLG; it reads AKYNQLLRIEEELGSKAKFAGRNFRNPLAK. N6-acetyllysine is present on K406. K420 carries the post-translational modification N6-acetyllysine; alternate. K420 bears the N6-succinyllysine; alternate mark. K420 is subject to N6-malonyllysine; alternate.

Belongs to the enolase family. Mammalian enolase is composed of 3 isozyme subunits, alpha, beta and gamma, which can form homodimers or heterodimers which are cell-type and development-specific. ENO1 interacts with PLG in the neuronal plasma membrane and promotes its activation. The C-terminal lysine is required for this binding. Interacts with ENO4 and PGAM2. Interacts with CMTM6. It depends on Mg(2+) as a cofactor. Post-translationally, ISGylated. Lysine 2-hydroxyisobutyrylation (Khib) by p300/EP300 activates the phosphopyruvate hydratase activity.

The protein localises to the cytoplasm. It is found in the cell membrane. It catalyses the reaction (2R)-2-phosphoglycerate = phosphoenolpyruvate + H2O. It functions in the pathway carbohydrate degradation; glycolysis; pyruvate from D-glyceraldehyde 3-phosphate: step 4/5. In terms of biological role, glycolytic enzyme the catalyzes the conversion of 2-phosphoglycerate to phosphoenolpyruvate. In addition to glycolysis, involved in various processes such as growth control, hypoxia tolerance and allergic responses. May also function in the intravascular and pericellular fibrinolytic system due to its ability to serve as a receptor and activator of plasminogen on the cell surface of several cell-types such as leukocytes and neurons. Stimulates immunoglobulin production. The sequence is that of Alpha-enolase (ENO1) from Macaca fascicularis (Crab-eating macaque).